The primary structure comprises 661 residues: B3 domain-containing protein Os12g0591400 (661 aa).

4 DNA-binding regions (TF-B3) span residues 2 to 95 (GDQK…FNPS), 197 to 290 (KTRC…FNPS), 437 to 535 (LYIT…FKES), and 562 to 658 (TNLT…IRKG).

It is found in the nucleus. This Oryza sativa subsp. japonica (Rice) protein is B3 domain-containing protein Os12g0591400.